The primary structure comprises 61 residues: Type IV secretion system protein PtlI homolog (61 aa).

The first 25 residues, 1 to 25, serve as a signal peptide directing secretion; the sequence is MIHAHSNARLLRWAILAIAPVTLGA. The tract at residues 37-61 is disordered; the sequence is PDGKPLIPINTAAPEQGSSCQTRAP. Polar residues predominate over residues 52 to 61; that stretch reads QGSSCQTRAP.

This Bordetella parapertussis (strain 12822 / ATCC BAA-587 / NCTC 13253) protein is Type IV secretion system protein PtlI homolog (ptlI).